Here is a 207-residue protein sequence, read N- to C-terminus: Large ribosomal subunit protein uL4 (207 aa).

Residues 48–70 are disordered; it reads KAQKTRSEVSGGGAKPWRQKGTG.

This sequence belongs to the universal ribosomal protein uL4 family. Part of the 50S ribosomal subunit.

Its function is as follows. One of the primary rRNA binding proteins, this protein initially binds near the 5'-end of the 23S rRNA. It is important during the early stages of 50S assembly. It makes multiple contacts with different domains of the 23S rRNA in the assembled 50S subunit and ribosome. In terms of biological role, forms part of the polypeptide exit tunnel. The polypeptide is Large ribosomal subunit protein uL4 (Francisella tularensis subsp. mediasiatica (strain FSC147)).